The sequence spans 173 residues: 3-hydroxydecanoyl-[acyl-carrier-protein] dehydratase (173 aa).

His-71 is a catalytic residue.

It belongs to the thioester dehydratase family. FabA subfamily. As to quaternary structure, homodimer.

The protein resides in the cytoplasm. The enzyme catalyses a (3R)-hydroxyacyl-[ACP] = a (2E)-enoyl-[ACP] + H2O. It catalyses the reaction (3R)-hydroxydecanoyl-[ACP] = (2E)-decenoyl-[ACP] + H2O. The catalysed reaction is (2E)-decenoyl-[ACP] = (3Z)-decenoyl-[ACP]. It participates in lipid metabolism; fatty acid biosynthesis. Functionally, necessary for the introduction of cis unsaturation into fatty acids. Catalyzes the dehydration of (3R)-3-hydroxydecanoyl-ACP to E-(2)-decenoyl-ACP and then its isomerization to Z-(3)-decenoyl-ACP. Can catalyze the dehydratase reaction for beta-hydroxyacyl-ACPs with saturated chain lengths up to 16:0, being most active on intermediate chain length. This chain is 3-hydroxydecanoyl-[acyl-carrier-protein] dehydratase, found in Bradyrhizobium sp. (strain BTAi1 / ATCC BAA-1182).